The sequence spans 178 residues: Adenine phosphoribosyltransferase (178 aa).

The protein belongs to the purine/pyrimidine phosphoribosyltransferase family. As to quaternary structure, homodimer.

It localises to the cytoplasm. The catalysed reaction is AMP + diphosphate = 5-phospho-alpha-D-ribose 1-diphosphate + adenine. The protein operates within purine metabolism; AMP biosynthesis via salvage pathway; AMP from adenine: step 1/1. In terms of biological role, catalyzes a salvage reaction resulting in the formation of AMP, that is energically less costly than de novo synthesis. The sequence is that of Adenine phosphoribosyltransferase from Cereibacter sphaeroides (strain ATCC 17025 / ATH 2.4.3) (Rhodobacter sphaeroides).